The primary structure comprises 648 residues: Forkhead box protein N1 (648 aa).

The tract at residues 1 to 105 (MVSLPPPQSD…SDKYPGFGFE (105 aa)) is disordered. The span at 58 to 67 (ERTPSLPPHS) shows a compositional bias: pro residues. Residues 271–367 (KPIYSYSILI…EELQKWKRKD (97 aa)) constitute a DNA-binding region (fork-head). Disordered regions lie at residues 392-445 (LGSP…LLMG), 458-508 (LSPG…LLAE), and 623-648 (LEPT…VALA). Positions 462–473 (LAPPGPPQPLFP) are enriched in pro residues.

Expressed in thymus.

It is found in the nucleus. Its function is as follows. Transcriptional regulator which regulates the development, differentiation, and function of thymic epithelial cells (TECs) both in the prenatal and postnatal thymus. Acts as a master regulator of the TECs lineage development and is required from the onset of differentiation in progenitor TECs in the developing fetus to the final differentiation steps through which TECs mature to acquire their full functionality. Regulates, either directly or indirectly the expression of a variety of genes that mediate diverse aspects of thymus development and function, including MHC Class II, DLL4, CCL25, CTSL, CD40 and PAX1. Regulates the differentiation of the immature TECs into functional cortical TECs (cTECs) and medullary TECs (mTECs). Essential for maintenance of mTECs population in the postnatal thymus. Involved in the morphogenesis and maintenance of the three-dimensional thymic microstructure which is necessary for a fully functional thymus. Plays an important role in the maintenance of hematopoiesis and particularly T lineage progenitors within the bone marrow niche with age. Essential for the vascularization of the thymus anlage. Promotes the terminal differentiation of epithelial cells in the epidermis and hair follicles, partly by negatively regulating the activity of protein kinase C. Plays a crucial role in the early prenatal stages of T-cell ontogeny. The sequence is that of Forkhead box protein N1 (FOXN1) from Homo sapiens (Human).